The chain runs to 528 residues: Na(+)/H(+) antiporter NhaB (528 aa).

Helical transmembrane passes span 10 to 30 (IGNFLGNSPKWYKIAILSFLI), 63 to 83 (YPLQPGGLLAIEAVAIGMTSA), 96 to 116 (VLLLLVFMVAGIYFMKQLLLF), 131 to 165 (VSLMFCLTSAFLSAFLDALTVIAVIIAVAVGFYAI), 204 to 224 (LLMHAGVGTALGGVCTMVGEP), 240 to 260 (FVIRMSPVTVPVLIAGILTCL), 305 to 325 (VLVGVWLIAGLALHLASVGLV), 359 to 379 (LAVFFAVVAVIIDQHLFAPVI), 391 to 411 (LVIFYIANGLLSMVSDNVFVG), 449 to 469 (ATPNGQAAFLFLLTSALAPLI), and 476 to 496 (MVWMALPYTIVLSVVGVLAIE).

Belongs to the NhaB Na(+)/H(+) (TC 2.A.34) antiporter family.

The protein resides in the cell inner membrane. The enzyme catalyses 2 Na(+)(in) + 3 H(+)(out) = 2 Na(+)(out) + 3 H(+)(in). Na(+)/H(+) antiporter that extrudes sodium in exchange for external protons. The chain is Na(+)/H(+) antiporter NhaB from Shewanella putrefaciens (strain CN-32 / ATCC BAA-453).